The following is a 75-amino-acid chain: DNA-directed RNA polymerase subunit epsilon (75 aa).

Belongs to the RNA polymerase subunit epsilon family. RNAP is composed of a core of 2 alpha, a beta and a beta' subunit. The core is associated with a delta subunit, and at least one of epsilon or omega. When a sigma factor is associated with the core the holoenzyme is formed, which can initiate transcription.

The enzyme catalyses RNA(n) + a ribonucleoside 5'-triphosphate = RNA(n+1) + diphosphate. In terms of biological role, a non-essential component of RNA polymerase (RNAP). This chain is DNA-directed RNA polymerase subunit epsilon, found in Lactobacillus gasseri (strain ATCC 33323 / DSM 20243 / BCRC 14619 / CIP 102991 / JCM 1131 / KCTC 3163 / NCIMB 11718 / NCTC 13722 / AM63).